Consider the following 258-residue polypeptide: Imidazole glycerol phosphate synthase subunit HisF (258 aa).

Active-site residues include aspartate 11 and aspartate 130.

It belongs to the HisA/HisF family. In terms of assembly, heterodimer of HisH and HisF.

It localises to the cytoplasm. It catalyses the reaction 5-[(5-phospho-1-deoxy-D-ribulos-1-ylimino)methylamino]-1-(5-phospho-beta-D-ribosyl)imidazole-4-carboxamide + L-glutamine = D-erythro-1-(imidazol-4-yl)glycerol 3-phosphate + 5-amino-1-(5-phospho-beta-D-ribosyl)imidazole-4-carboxamide + L-glutamate + H(+). The protein operates within amino-acid biosynthesis; L-histidine biosynthesis; L-histidine from 5-phospho-alpha-D-ribose 1-diphosphate: step 5/9. Its function is as follows. IGPS catalyzes the conversion of PRFAR and glutamine to IGP, AICAR and glutamate. The HisF subunit catalyzes the cyclization activity that produces IGP and AICAR from PRFAR using the ammonia provided by the HisH subunit. This chain is Imidazole glycerol phosphate synthase subunit HisF, found in Escherichia coli O7:K1 (strain IAI39 / ExPEC).